The primary structure comprises 304 residues: Type II methyltransferase M.HindV (304 aa).

The 299-residue stretch at 1–299 (MKCVDLFSGC…SAIINFEKEP (299 aa)) folds into the SAM-dependent MTase C5-type domain. Residue C75 is part of the active site.

Belongs to the class I-like SAM-binding methyltransferase superfamily. C5-methyltransferase family.

It carries out the reaction a 2'-deoxycytidine in DNA + S-adenosyl-L-methionine = a 5-methyl-2'-deoxycytidine in DNA + S-adenosyl-L-homocysteine + H(+). Functionally, a methylase, recognizes the double-stranded sequence 5'-GRCGYC-3', methylates C-? on both strands, and protects the DNA from cleavage by the HindV endonuclease. The polypeptide is Type II methyltransferase M.HindV (hindVM) (Haemophilus influenzae (strain ATCC 51907 / DSM 11121 / KW20 / Rd)).